A 94-amino-acid chain; its full sequence is MTRGTPAFGKRHQKTHTLCRRCGKATYHKQKLRCAACGYPDAKMRRYDGWGQKVRDRKGQGTGRMRYMKTIARRAKNGFRSGTQAAPKVKAATN.

Zn(2+) is bound by residues cysteine 19, cysteine 22, cysteine 34, and cysteine 37. A C4-type zinc finger spans residues 19-37; that stretch reads CRRCGKATYHKQKLRCAAC.

The protein belongs to the eukaryotic ribosomal protein eL37 family. Requires Zn(2+) as cofactor.

The protein resides in the cytoplasm. In terms of biological role, binds to the 23S rRNA. The protein is Large ribosomal subunit protein eL37 (RPL37) of Tetrahymena thermophila (strain SB210).